A 228-amino-acid polypeptide reads, in one-letter code: 7-cyano-7-deazaguanine synthase (228 aa).

9–19 contributes to the ATP binding site; it reads LSGGPDSTTVL. Zn(2+)-binding residues include cysteine 193, cysteine 203, cysteine 206, and cysteine 209.

This sequence belongs to the QueC family. The cofactor is Zn(2+).

The enzyme catalyses 7-carboxy-7-deazaguanine + NH4(+) + ATP = 7-cyano-7-deazaguanine + ADP + phosphate + H2O + H(+). Its pathway is purine metabolism; 7-cyano-7-deazaguanine biosynthesis. Functionally, catalyzes the ATP-dependent conversion of 7-carboxy-7-deazaguanine (CDG) to 7-cyano-7-deazaguanine (preQ(0)). This Rickettsia peacockii (strain Rustic) protein is 7-cyano-7-deazaguanine synthase.